Consider the following 95-residue polypeptide: Parvalbumin beta 3 (95 aa).

N-acetylalanine is present on A1. EF-hand domains follow at residues 39–66 (FFAI…FSAG) and 77–95 (DVDG…LVKA). Ca(2+)-binding residues include D44, D46, S48, F50, E52, E55, D77, D79, D81, M83, and E88.

This sequence belongs to the parvalbumin family.

Functionally, in muscle, parvalbumin is thought to be involved in relaxation after contraction. It binds two calcium ions. The polypeptide is Parvalbumin beta 3 (Merluccius paradoxus (Deep-water Cape hake)).